A 128-amino-acid chain; its full sequence is uncharacterized protein (128 aa).

A run of 2 helical transmembrane segments spans residues 52-72 and 91-111; these read LLVILLLIIGFLSCLLGGIFL and LFVAFFVVGSLLLLVAVVMLI.

The protein localises to the cell membrane. This is an uncharacterized protein from Mycoplasma pneumoniae (strain ATCC 29342 / M129 / Subtype 1) (Mycoplasmoides pneumoniae).